The chain runs to 615 residues: Erythritol-mannosyl-transferase 1 (615 aa).

Residues 366–387 form a disordered region; the sequence is RTPNNTGASTPTAPISSPDFEE. Residues 367-380 are compositionally biased toward polar residues; sequence TPNNTGASTPTAPI.

Belongs to the UDP-glycosyltransferase family.

The protein localises to the vacuole membrane. It participates in secondary metabolite biosynthesis. In terms of biological role, erythritol-mannosyl-transferase; part of the gene cluster that mediates the biosynthesis of mannosylerythritol lipids (MELs), surface-active substances that enhance the availability of water-insoluble substrates. Mannosylerythritol lipid production is responsible for hemolytic activity of Ustilago maydis. Depending on the number of acetyl groups, mannosylerythritol lipids can be differentiated into MEL A (fully acetylated), MEL B and MEL C (monoacetylated at R-6 and R-4, respectively), and the fully deacetylated MEL D. The first step in the pathway is the generation of mannosylerythritol by the glycosyltransferase EMT1 which catalyzes the transfer of GDP-mannose to the C-4 atom of meso-erythritol. This reaction has to be stereospecific, since only mannosyl-D-erythritol is generated. The produced disaccharide is subsequently acylated with fatty acids of various lengths derived from the peroxisomal beta-oxidation by the peroxisomal acyltransferases MAC1 and MAC2 at positions C-2 and C-3, repectively. The existence of MEL derivatives which carry an acetyl group at C-2 implies that at least MAC1 also accepts acetyl-CoA as a donor. The final step of MEL biosynthesis is the acetylation of the fully acylated mannosylerythritol lipids catalyzed by the acetyl-CoA-dependent acetyltransferase MAT1. MAT1 displays a relaxed regioselectivity and is able to transfer acetylgroups to both positions C-4 and C-6 of the mannosyl moiety. The chain is Erythritol-mannosyl-transferase 1 from Mycosarcoma maydis (Corn smut fungus).